A 142-amino-acid polypeptide reads, in one-letter code: Large ribosomal subunit protein uL13 (142 aa).

It belongs to the universal ribosomal protein uL13 family. Part of the 50S ribosomal subunit.

This protein is one of the early assembly proteins of the 50S ribosomal subunit, although it is not seen to bind rRNA by itself. It is important during the early stages of 50S assembly. The protein is Large ribosomal subunit protein uL13 of Shigella boydii serotype 18 (strain CDC 3083-94 / BS512).